A 107-amino-acid chain; its full sequence is Large ribosomal subunit protein uL24 (107 aa).

Belongs to the universal ribosomal protein uL24 family. In terms of assembly, part of the 50S ribosomal subunit.

Functionally, one of two assembly initiator proteins, it binds directly to the 5'-end of the 23S rRNA, where it nucleates assembly of the 50S subunit. One of the proteins that surrounds the polypeptide exit tunnel on the outside of the subunit. This Mesomycoplasma hyopneumoniae (strain J / ATCC 25934 / NCTC 10110) (Mycoplasma hyopneumoniae) protein is Large ribosomal subunit protein uL24.